Consider the following 459-residue polypeptide: Friend virus susceptibility protein 1 (459 aa).

The interval 192–269 (EAELPTVLAS…LNSLAHSNRQ (78 aa)) is disordered. Over residues 213–223 (SKERTQQDKAD) the composition is skewed to basic and acidic residues. The span at 226–238 (QIQSSTSLVTSEP) shows a compositional bias: polar residues.

Its function is as follows. Retroviral restriction factor that prevents infection by gammaretroviruses. Acts by interacting with the capsid protein ca after entry of the virus into the cell. This interaction presumably disrupt the capsid thereby inactivating the viral genome, making it unable to enter host nucleus and integrate into host genome. The sequence is that of Friend virus susceptibility protein 1 (Fv1) from Mus musculus (Mouse).